A 68-amino-acid polypeptide reads, in one-letter code: Large ribosomal subunit protein bL35 (68 aa).

The protein belongs to the bacterial ribosomal protein bL35 family.

The polypeptide is Large ribosomal subunit protein bL35 (Pelagibacter ubique (strain HTCC1062)).